A 230-amino-acid chain; its full sequence is Cytidylate kinase (230 aa).

17-25 (GPTASGKGT) is an ATP binding site.

It belongs to the cytidylate kinase family. Type 1 subfamily.

The protein localises to the cytoplasm. It carries out the reaction CMP + ATP = CDP + ADP. The enzyme catalyses dCMP + ATP = dCDP + ADP. This is Cytidylate kinase from Ralstonia nicotianae (strain ATCC BAA-1114 / GMI1000) (Ralstonia solanacearum).